Consider the following 109-residue polypeptide: Small ribosomal subunit protein bS6 (109 aa).

The protein belongs to the bacterial ribosomal protein bS6 family.

Its function is as follows. Binds together with bS18 to 16S ribosomal RNA. This Anaplasma phagocytophilum (strain HZ) protein is Small ribosomal subunit protein bS6.